A 330-amino-acid polypeptide reads, in one-letter code: Ketol-acid reductoisomerase (NADP(+)) (330 aa).

A KARI N-terminal Rossmann domain is found at 2–181 (AKVYYDNDVN…GATRAGVIET (180 aa)). NADP(+) contacts are provided by residues 25-28 (YGSQ), arginine 48, serine 52, and 82-85 (DEVQ). Histidine 107 is an active-site residue. NADP(+) is bound at residue glycine 133. Positions 182-327 (TFKEETETDL…ADLRMMMPFI (146 aa)) constitute a KARI C-terminal knotted domain. Positions 190, 194, 226, and 230 each coordinate Mg(2+). Serine 251 is a substrate binding site.

This sequence belongs to the ketol-acid reductoisomerase family. Mg(2+) serves as cofactor.

The catalysed reaction is (2R)-2,3-dihydroxy-3-methylbutanoate + NADP(+) = (2S)-2-acetolactate + NADPH + H(+). The enzyme catalyses (2R,3R)-2,3-dihydroxy-3-methylpentanoate + NADP(+) = (S)-2-ethyl-2-hydroxy-3-oxobutanoate + NADPH + H(+). It participates in amino-acid biosynthesis; L-isoleucine biosynthesis; L-isoleucine from 2-oxobutanoate: step 2/4. It functions in the pathway amino-acid biosynthesis; L-valine biosynthesis; L-valine from pyruvate: step 2/4. Its function is as follows. Involved in the biosynthesis of branched-chain amino acids (BCAA). Catalyzes an alkyl-migration followed by a ketol-acid reduction of (S)-2-acetolactate (S2AL) to yield (R)-2,3-dihydroxy-isovalerate. In the isomerase reaction, S2AL is rearranged via a Mg-dependent methyl migration to produce 3-hydroxy-3-methyl-2-ketobutyrate (HMKB). In the reductase reaction, this 2-ketoacid undergoes a metal-dependent reduction by NADPH to yield (R)-2,3-dihydroxy-isovalerate. The polypeptide is Ketol-acid reductoisomerase (NADP(+)) (Macrococcus caseolyticus (strain JCSC5402) (Macrococcoides caseolyticum)).